We begin with the raw amino-acid sequence, 213 residues long: Peptidoglycan-N-acetylglucosamine deacetylase BC_3618 (213 aa).

In terms of domain architecture, NodB homology spans 22–203; sequence KIIAITFDDG…ELKKQGYRFV (182 aa). The Proton acceptor role is filled by Asp-29. Zn(2+)-binding residues include Asp-30, His-80, and His-84. His-175 serves as the catalytic Proton donor.

This sequence belongs to the polysaccharide deacetylase family. Zn(2+) is required as a cofactor.

The catalysed reaction is peptidoglycan-N-acetyl-D-glucosamine + H2O = peptidoglycan-D-glucosamine + acetate.. With respect to regulation, inhibited by CuCl(2) and ZnCl(2). Functionally, catalyzes the deacetylation of N-acetylglucosamine (GlcNAc) residues in peptidoglycan. Also acts on soluble chitin substrates and N-acetylchitooligomers. Acts on cell wall peptidoglycan from the Gram-positive bacteria B.cereus and B.subtilis and the Gram-negative bacterium H.pylori. Not active on acetylated xylan. The chain is Peptidoglycan-N-acetylglucosamine deacetylase BC_3618 from Bacillus cereus (strain ATCC 14579 / DSM 31 / CCUG 7414 / JCM 2152 / NBRC 15305 / NCIMB 9373 / NCTC 2599 / NRRL B-3711).